The primary structure comprises 203 residues: E3 ubiquitin-protein ligase RNF152 (203 aa).

Residues 12–55 (CQICFNYYSPRRRPKLLDCKHTCCSVCLQQMRTSQKDVRCPWCR) form an RING-type zinc finger. The interval 106 to 165 (ISKERTLLPGDMGCRLLPGSQQKSLTVVTIPAEQQPLQGGAPPEAVEEEPDRRGVVKSST) is necessary for interaction with RRAGA. The tract at residues 139-158 (QQPLQGGAPPEAVEEEPDRR) is disordered. A helical membrane pass occupies residues 167–187 (SGVCTVILVACVLVFLLGIVL).

This sequence belongs to the RNF152 family. Interacts with RRAGA (inactive GDP-bound form); stimulated by amino acid starvation. Interacts with SEC16A. In terms of processing, ubiquitinated. Autoubiquitinated in vitro, leading to its degradation by the proteasome.

It is found in the lysosome membrane. The enzyme catalyses S-ubiquitinyl-[E2 ubiquitin-conjugating enzyme]-L-cysteine + [acceptor protein]-L-lysine = [E2 ubiquitin-conjugating enzyme]-L-cysteine + N(6)-ubiquitinyl-[acceptor protein]-L-lysine.. The protein operates within protein modification; protein ubiquitination. Its function is as follows. E3 ubiquitin-protein ligase that acts as a negative regulator of mTORC1 signaling by mediating ubiquitination of RagA/RRAGA and RHEB. Catalyzes 'Lys-63'-linked polyubiquitination of RagA/RRAGA in response to amino acid starvation, thereby regulating mTORC1 signaling. Also mediates monoubiquitination of RHEB, promoting its association with the TSC-TBC complex and subsequent inhibition. Also mediates 'Lys-48'-linked polyubiquitination of target proteins and their subsequent targeting to the proteasome for degradation. Induces apoptosis when overexpressed. The sequence is that of E3 ubiquitin-protein ligase RNF152 from Mus musculus (Mouse).